Reading from the N-terminus, the 115-residue chain is UPF0125 protein VP0646 (115 aa).

The disordered stretch occupies residues 92-115; the sequence is RAEQAKAAGNADPVTGGKPNALRK.

Belongs to the UPF0125 (RnfH) family.

The protein is UPF0125 protein VP0646 of Vibrio parahaemolyticus serotype O3:K6 (strain RIMD 2210633).